Here is a 226-residue protein sequence, read N- to C-terminus: uncharacterized protein (226 aa).

This sequence belongs to the SSM1 family.

This is an uncharacterized protein from Schizosaccharomyces pombe (strain 972 / ATCC 24843) (Fission yeast).